A 338-amino-acid polypeptide reads, in one-letter code: GTPase Obg (338 aa).

In terms of domain architecture, Obg spans 1–159 (MQFIDEVKIH…RWLRLELKLM (159 aa)). The disordered stretch occupies residues 66–91 (KAGRGKNGMGKDRHGANGDDLTIPVP). The OBG-type G domain maps to 160–331 (ADVGLLGFPN…LLDEIARHLW (172 aa)). GTP-binding positions include 166–173 (GFPNVGKS), 191–195 (FTTIK), 213–216 (DIPG), 283–286 (NKID), and 312–314 (SAA). Residues Ser-173 and Thr-193 each coordinate Mg(2+).

The protein belongs to the TRAFAC class OBG-HflX-like GTPase superfamily. OBG GTPase family. As to quaternary structure, monomer. Mg(2+) serves as cofactor.

The protein localises to the cytoplasm. In terms of biological role, an essential GTPase which binds GTP, GDP and possibly (p)ppGpp with moderate affinity, with high nucleotide exchange rates and a fairly low GTP hydrolysis rate. Plays a role in control of the cell cycle, stress response, ribosome biogenesis and in those bacteria that undergo differentiation, in morphogenesis control. The sequence is that of GTPase Obg from Geobacter metallireducens (strain ATCC 53774 / DSM 7210 / GS-15).